Here is a 477-residue protein sequence, read N- to C-terminus: Protein U33 (477 aa).

Belongs to the herpesviridae UL49 family.

This Homo sapiens (Human) protein is Protein U33 (U33).